The following is an 835-amino-acid chain: Protein translocase subunit SecA (835 aa).

ATP-binding positions include glutamine 85, 103-107 (GEGKT), and aspartate 492. The Zn(2+) site is built by cysteine 819, cysteine 821, cysteine 830, and cysteine 831.

It belongs to the SecA family. In terms of assembly, monomer and homodimer. Part of the essential Sec protein translocation apparatus which comprises SecA, SecYEG and auxiliary proteins SecDF. Other proteins may also be involved. Zn(2+) is required as a cofactor.

The protein localises to the cell membrane. The protein resides in the cytoplasm. The enzyme catalyses ATP + H2O + cellular proteinSide 1 = ADP + phosphate + cellular proteinSide 2.. Functionally, part of the Sec protein translocase complex. Interacts with the SecYEG preprotein conducting channel. Has a central role in coupling the hydrolysis of ATP to the transfer of proteins into and across the cell membrane, serving as an ATP-driven molecular motor driving the stepwise translocation of polypeptide chains across the membrane. The polypeptide is Protein translocase subunit SecA (Clostridium botulinum (strain Kyoto / Type A2)).